A 174-amino-acid polypeptide reads, in one-letter code: Scytalone dehydratase-like protein Arp1 (174 aa).

Residue Y49 coordinates substrate. Catalysis depends on residues H84 and H109. N130 lines the substrate pocket.

This sequence belongs to the scytalone dehydratase family. In terms of assembly, homotrimer. Each subunit contains an active site, located in the central part of the hydrophobic core of the monomer, which functions independently.

Functionally, scytalone dehydratase-like protein; part of the Pks2 gene cluster that mediates the formation of infectious structures (appressoria), enabling these fungi to kill insects faster. The product of the Pks2 gene cluster is different from the one of Pks1 and has still not been identified. This chain is Scytalone dehydratase-like protein Arp1, found in Metarhizium majus (strain ARSEF 297).